The following is a 296-amino-acid chain: Cell division protein DivIB (296 aa).

Topologically, residues 1 to 29 (MTKEIPKINNEYLKEKRKKQRIQQRRVQR) are cytoplasmic. A helical transmembrane segment spans residues 30 to 50 (MIVGILVVIVLLILVYMFTPI). The POTRA domain maps to 51 to 119 (SHIKSADIKG…NPIEVNVKEH (69 aa)). Topologically, residues 51–296 (SHIKSADIKG…NKIKDEESSE (246 aa)) are extracellular. Residues 256–273 (NNGQTSSASAKEVQSGTA) are compositionally biased toward polar residues. The interval 256–296 (NNGQTSSASAKEVQSGTASEDKAKDDLQKALNKIKDEESSE) is disordered. A compositionally biased stretch (basic and acidic residues) spans 274–296 (SEDKAKDDLQKALNKIKDEESSE).

The protein belongs to the FtsQ/DivIB family. DivIB subfamily.

The protein resides in the cell membrane. Functionally, cell division protein that may be involved in stabilizing or promoting the assembly of the division complex. The protein is Cell division protein DivIB of Staphylococcus pseudintermedius (strain HKU10-03).